The chain runs to 175 residues: GTP-dependent dephospho-CoA kinase (175 aa).

Residues aspartate 48, valine 49, valine 50, aspartate 66, and glutamate 124 each coordinate GTP.

The protein belongs to the GTP-dependent DPCK family.

The enzyme catalyses 3'-dephospho-CoA + GTP = GDP + CoA + H(+). It functions in the pathway cofactor biosynthesis; coenzyme A biosynthesis. Catalyzes the GTP-dependent phosphorylation of the 3'-hydroxyl group of dephosphocoenzyme A to form coenzyme A (CoA). The chain is GTP-dependent dephospho-CoA kinase from Thermofilum pendens (strain DSM 2475 / Hrk 5).